The chain runs to 160 residues: UPF0262 protein BSUIS_A0274 (160 aa).

Belongs to the UPF0262 family.

The chain is UPF0262 protein BSUIS_A0274 from Brucella suis (strain ATCC 23445 / NCTC 10510).